The following is a 271-amino-acid chain: 4,5-DOPA dioxygenase extradiol (271 aa).

Zn(2+)-binding residues include His22, His57, His177, and His234.

It belongs to the DODA-type extradiol aromatic ring-opening dioxygenase family. In terms of assembly, monomer. The cofactor is Zn(2+).

It is found in the cytoplasm. The enzyme catalyses L-dopa + O2 = 4-(L-alanin-3-yl)-2-hydroxy-cis,cis-muconate 6-semialdehyde + H(+). Functionally, in vitro, opens the cyclic ring of dihydroxy-phenylalanine (DOPA) between carbons 4 and 5, thus producing an unstable seco-DOPA that rearranges nonenzymatically to betalamic acid. The physiological substrate is unknown. This chain is 4,5-DOPA dioxygenase extradiol (ygiD), found in Escherichia coli (strain K12).